The sequence spans 253 residues: uncharacterized protein (253 aa).

Residues 1–19 (MRYLKRITIYISLLILVSG) form the signal peptide. Cys-20 is lipidated: N-palmitoyl cysteine. A lipid anchor (S-diacylglycerol cysteine) is attached at Cys-20.

This sequence belongs to the staphylococcal tandem lipoprotein family.

The protein resides in the cell membrane. This is an uncharacterized protein from Staphylococcus epidermidis (strain ATCC 12228 / FDA PCI 1200).